The following is a 246-amino-acid chain: Probable chemoreceptor glutamine deamidase CheD (246 aa).

The tract at residues 225 to 246 (GAGVQPAVQKAASPYAANLSRK) is disordered.

Belongs to the CheD family.

It catalyses the reaction L-glutaminyl-[protein] + H2O = L-glutamyl-[protein] + NH4(+). Functionally, probably deamidates glutamine residues to glutamate on methyl-accepting chemotaxis receptors (MCPs), playing an important role in chemotaxis. The polypeptide is Probable chemoreceptor glutamine deamidase CheD (Burkholderia vietnamiensis (strain G4 / LMG 22486) (Burkholderia cepacia (strain R1808))).